We begin with the raw amino-acid sequence, 45 residues long: Monellin chain A (45 aa).

As to quaternary structure, heterodimer of an A chain and a B chain.

In terms of biological role, taste-modifying protein; intensely sweet-tasting protein. The protein is Monellin chain A of Dioscoreophyllum cumminsii (Serendipity berry).